The sequence spans 310 residues: 4-diphosphocytidyl-2-C-methyl-D-erythritol kinase (310 aa).

Lysine 11 is an active-site residue. 95-105 (PIGAGLAGGSA) is an ATP binding site. Aspartate 137 is an active-site residue.

It belongs to the GHMP kinase family. IspE subfamily.

The catalysed reaction is 4-CDP-2-C-methyl-D-erythritol + ATP = 4-CDP-2-C-methyl-D-erythritol 2-phosphate + ADP + H(+). It functions in the pathway isoprenoid biosynthesis; isopentenyl diphosphate biosynthesis via DXP pathway; isopentenyl diphosphate from 1-deoxy-D-xylulose 5-phosphate: step 3/6. Its function is as follows. Catalyzes the phosphorylation of the position 2 hydroxy group of 4-diphosphocytidyl-2C-methyl-D-erythritol. This is 4-diphosphocytidyl-2-C-methyl-D-erythritol kinase from Acaryochloris marina (strain MBIC 11017).